We begin with the raw amino-acid sequence, 238 residues long: Large ribosomal subunit protein uL1 (238 aa).

It belongs to the universal ribosomal protein uL1 family. Part of the 50S ribosomal subunit.

Its function is as follows. Binds directly to 23S rRNA. The L1 stalk is quite mobile in the ribosome, and is involved in E site tRNA release. Protein L1 is also a translational repressor protein, it controls the translation of the L11 operon by binding to its mRNA. The protein is Large ribosomal subunit protein uL1 of Frankia casuarinae (strain DSM 45818 / CECT 9043 / HFP020203 / CcI3).